A 360-amino-acid polypeptide reads, in one-letter code: Magnesium transporter NIPA2 (360 aa).

Residues 1–9 lie on the Extracellular side of the membrane; the sequence is MSQGRGKYD. Residues 10-30 form a helical membrane-spanning segment; sequence FYIGLGLAMSSSIFIGGSFIL. The Cytoplasmic segment spans residues 31–56; the sequence is KKKGLLRLARKGSMRAGQGGHAYLKE. A helical transmembrane segment spans residues 57-77; the sequence is WLWWAGLLSMGAGEVANFAAY. Alanine 78 is a topological domain (extracellular). A helical membrane pass occupies residues 79 to 99; it reads FAPATLVTPLGALSVLVSAIL. At 100 to 107 the chain is on the cytoplasmic side; the sequence is SSYFLNER. The helical transmembrane segment at 108–128 threads the bilayer; the sequence is LNLHGKIGCLLSILGSTVMVI. Topologically, residues 129-149 are extracellular; sequence HAPKEEEIETLNEMSHKLGDP. The helical transmembrane segment at 150 to 170 threads the bilayer; that stretch reads GFVVFATLVVIVALILIFVVG. Over 171–175 the chain is Cytoplasmic; the sequence is PRHGQ. A helical transmembrane segment spans residues 176–196; it reads TNILVYITICSVIGAFSVSCV. The Extracellular segment spans residues 197-215; it reads KGLGIAIKELFAGKPVLRH. The chain crosses the membrane as a helical span at residues 216 to 236; the sequence is PLAWILLLSLIVCVSTQINYL. Residues 237 to 246 lie on the Cytoplasmic side of the membrane; it reads NRALDIFNTS. Residues 247–267 form a helical membrane-spanning segment; it reads IVTPIYYVFFTTSVLTCSAIL. Residues 268–278 lie on the Extracellular side of the membrane; it reads FKEWQDMPVDD. Residues 279 to 299 traverse the membrane as a helical segment; that stretch reads VIGTLSGFFTIIVGIFLLHAF. The Cytoplasmic portion of the chain corresponds to 300–360; sequence KDVSFSLASL…SRRNGNLTAF (61 aa).

It belongs to the NIPA family. In terms of tissue distribution, widely expressed.

It is found in the cell membrane. The protein resides in the early endosome. The catalysed reaction is Mg(2+)(in) = Mg(2+)(out). Its function is as follows. Acts as a selective Mg(2+) transporter. The chain is Magnesium transporter NIPA2 (NIPA2) from Homo sapiens (Human).